The sequence spans 146 residues: Large ribosomal subunit protein uL16 (146 aa).

It belongs to the universal ribosomal protein uL16 family. Part of the 50S ribosomal subunit.

In terms of biological role, binds 23S rRNA and is also seen to make contacts with the A and possibly P site tRNAs. In Lactobacillus helveticus (strain DPC 4571), this protein is Large ribosomal subunit protein uL16.